Consider the following 454-residue polypeptide: Pup--protein ligase (454 aa).

Glutamate 9 is a Mg(2+) binding site. Arginine 53 contributes to the ATP binding site. Tyrosine 55 lines the Mg(2+) pocket. Catalysis depends on aspartate 57, which acts as the Proton acceptor. Residue glutamate 63 participates in Mg(2+) binding. Positions 66 and 420 each coordinate ATP.

It belongs to the Pup ligase/Pup deamidase family. Pup-conjugating enzyme subfamily.

It catalyses the reaction ATP + [prokaryotic ubiquitin-like protein]-L-glutamate + [protein]-L-lysine = ADP + phosphate + N(6)-([prokaryotic ubiquitin-like protein]-gamma-L-glutamyl)-[protein]-L-lysine.. It functions in the pathway protein degradation; proteasomal Pup-dependent pathway. The protein operates within protein modification; protein pupylation. Catalyzes the covalent attachment of the prokaryotic ubiquitin-like protein modifier Pup to the proteasomal substrate proteins, thereby targeting them for proteasomal degradation. This tagging system is termed pupylation. The ligation reaction involves the side-chain carboxylate of the C-terminal glutamate of Pup and the side-chain amino group of a substrate lysine. The polypeptide is Pup--protein ligase (Arthrobacter sp. (strain FB24)).